The following is a 191-amino-acid chain: Gastrokine-3 (191 aa).

Residues 1–30 form the signal peptide; it reads MPLHSLERDNMRRLIAPSILVTVFLVPALA. Asn33 carries N-linked (GlcNAc...) asparagine glycosylation. The region spanning 63–155 is the BRICHOS domain; it reads NSVQSEWDGV…LCRAVPTYFA (93 aa). Residues Cys90 and Cys147 are joined by a disulfide bond.

This sequence belongs to the gastrokine family. In terms of tissue distribution, expressed in stomach. Present in mucus cells at the base of antral glands, and Brunner glands of the duodenum. Present at lower levels in the mucus neck cell region of the fundus (at protein level).

It localises to the secreted. In terms of biological role, inhibits gastric epithelial cell proliferation. This chain is Gastrokine-3 (Gkn3), found in Mus musculus (Mouse).